The chain runs to 85 residues: Toxin Cll6 (85 aa).

The first 19 residues, 1–19 (MNSLLMIIGCLVLIGTVWT), serve as a signal peptide directing secretion. Positions 20–83 (KEGYLVNMKT…TWPLPGKSCS (64 aa)) constitute an LCN-type CS-alpha/beta domain. Disulfide bonds link cysteine 31–cysteine 82, cysteine 35–cysteine 58, cysteine 44–cysteine 63, and cysteine 48–cysteine 65. Serine amide is present on serine 83.

Belongs to the long (4 C-C) scorpion toxin superfamily. Sodium channel inhibitor family. Beta subfamily. As to expression, expressed by the venom gland.

The protein localises to the secreted. In terms of biological role, beta toxins bind voltage-independently at site-4 of sodium channels (Nav) and shift the voltage of activation toward more negative potentials thereby affecting sodium channel activation and promoting spontaneous and repetitive firing. This is Toxin Cll6 from Centruroides limpidus (Mexican scorpion).